We begin with the raw amino-acid sequence, 197 residues long: MRKATITRKTKETAIEVAVDLDGTGVSQVATGIGFFDHMLDLLARHSRIDIKVKADGDLHVDYHHTVEDVGIALGQAVKQALGSMAGITRYASLYMPMDETLTRVAIDISGRPALVFKAEFPRDKIGEFDTELVREWFNAFAGNAGITLHVETLYGENSHHIAESCFKGLARALRAAVAIDPRAAGEVPSTKGQLGG.

The protein belongs to the imidazoleglycerol-phosphate dehydratase family.

It localises to the cytoplasm. It carries out the reaction D-erythro-1-(imidazol-4-yl)glycerol 3-phosphate = 3-(imidazol-4-yl)-2-oxopropyl phosphate + H2O. The protein operates within amino-acid biosynthesis; L-histidine biosynthesis; L-histidine from 5-phospho-alpha-D-ribose 1-diphosphate: step 6/9. The protein is Imidazoleglycerol-phosphate dehydratase of Rhodopseudomonas palustris (strain BisA53).